A 277-amino-acid polypeptide reads, in one-letter code: 5'-nucleotidase SurE (277 aa).

Aspartate 14, aspartate 15, serine 46, and asparagine 104 together coordinate a divalent metal cation.

This sequence belongs to the SurE nucleotidase family. A divalent metal cation serves as cofactor.

It is found in the cytoplasm. The catalysed reaction is a ribonucleoside 5'-phosphate + H2O = a ribonucleoside + phosphate. In terms of biological role, nucleotidase that shows phosphatase activity on nucleoside 5'-monophosphates. In Picosynechococcus sp. (strain ATCC 27264 / PCC 7002 / PR-6) (Agmenellum quadruplicatum), this protein is 5'-nucleotidase SurE.